The sequence spans 28 residues: 3,4-dihydroxybenzoate decarboxylase (28 aa).

Homopentamer.

It carries out the reaction 3,4-dihydroxybenzoate + H(+) = catechol + CO2. Inhibited by oxygen. Completely inhibited by HgCl(2). Partially inhibited by ZnSO(4), 2,3,4-trihydroxybeonzoate and 3,4,5-trihydroxybeonzoate. Unaffected by KCl, MnCl(2) or EDTA. Not stimulated by thiamine phosphate, pyridoxal 5'-phosphate or biotin. Not inhibited by hydroxylamine, NaBH(4) or avidin. Its function is as follows. Reversibly catalyzes the decarboxylation of 3,4-dihydroxybenzoate to catechol. Inactive toward 4-hydroxybenzoate and other benzoate derivatives. In Sedimentibacter hydroxybenzoicus (Clostridium hydroxybenzoicum), this protein is 3,4-dihydroxybenzoate decarboxylase.